Reading from the N-terminus, the 188-residue chain is dTTP/UTP pyrophosphatase (188 aa).

Asp67 (proton acceptor) is an active-site residue.

This sequence belongs to the Maf family. YhdE subfamily. A divalent metal cation is required as a cofactor.

It is found in the cytoplasm. It carries out the reaction dTTP + H2O = dTMP + diphosphate + H(+). The catalysed reaction is UTP + H2O = UMP + diphosphate + H(+). Its function is as follows. Nucleoside triphosphate pyrophosphatase that hydrolyzes dTTP and UTP. May have a dual role in cell division arrest and in preventing the incorporation of modified nucleotides into cellular nucleic acids. This is dTTP/UTP pyrophosphatase from Thermococcus kodakarensis (strain ATCC BAA-918 / JCM 12380 / KOD1) (Pyrococcus kodakaraensis (strain KOD1)).